A 1144-amino-acid polypeptide reads, in one-letter code: ATP-dependent helicase/deoxyribonuclease subunit B (1144 aa).

One can recognise a UvrD-like helicase ATP-binding domain in the interval 1–276 (MAIRYVFGRA…IDLDRNERPV (276 aa)). An ATP-binding site is contributed by 8–15 (GRAGRGKS). A UvrD-like helicase C-terminal domain is found at 274–584 (RPVLPKVQEI…LVGSIERSKS (311 aa)). Residues C784, C1102, C1105, and C1111 each coordinate [4Fe-4S] cluster.

It belongs to the helicase family. AddB/RexB type 1 subfamily. As to quaternary structure, heterodimer of AddA and AddB. Mg(2+) serves as cofactor. Requires [4Fe-4S] cluster as cofactor.

The heterodimer acts as both an ATP-dependent DNA helicase and an ATP-dependent, dual-direction single-stranded exonuclease. Recognizes the chi site generating a DNA molecule suitable for the initiation of homologous recombination. The AddB subunit has 5' -&gt; 3' nuclease activity but not helicase activity. The protein is ATP-dependent helicase/deoxyribonuclease subunit B of Alkaliphilus oremlandii (strain OhILAs) (Clostridium oremlandii (strain OhILAs)).